The sequence spans 125 residues: Ribosome-binding factor A (125 aa).

It belongs to the RbfA family. As to quaternary structure, monomer. Binds 30S ribosomal subunits, but not 50S ribosomal subunits or 70S ribosomes.

The protein resides in the cytoplasm. Functionally, one of several proteins that assist in the late maturation steps of the functional core of the 30S ribosomal subunit. Associates with free 30S ribosomal subunits (but not with 30S subunits that are part of 70S ribosomes or polysomes). Required for efficient processing of 16S rRNA. May interact with the 5'-terminal helix region of 16S rRNA. This chain is Ribosome-binding factor A, found in Xylella fastidiosa (strain M12).